The chain runs to 342 residues: N-acetyl-gamma-glutamyl-phosphate reductase (342 aa).

Residue C147 is part of the active site.

This sequence belongs to the NAGSA dehydrogenase family. Type 1 subfamily.

It is found in the cytoplasm. The enzyme catalyses N-acetyl-L-glutamate 5-semialdehyde + phosphate + NADP(+) = N-acetyl-L-glutamyl 5-phosphate + NADPH + H(+). It participates in amino-acid biosynthesis; L-arginine biosynthesis; N(2)-acetyl-L-ornithine from L-glutamate: step 3/4. In terms of biological role, catalyzes the NADPH-dependent reduction of N-acetyl-5-glutamyl phosphate to yield N-acetyl-L-glutamate 5-semialdehyde. The chain is N-acetyl-gamma-glutamyl-phosphate reductase from Campylobacter jejuni (strain RM1221).